A 207-amino-acid polypeptide reads, in one-letter code: ATP phosphoribosyltransferase (207 aa).

The protein belongs to the ATP phosphoribosyltransferase family. Short subfamily. As to quaternary structure, heteromultimer composed of HisG and HisZ subunits.

The protein localises to the cytoplasm. The catalysed reaction is 1-(5-phospho-beta-D-ribosyl)-ATP + diphosphate = 5-phospho-alpha-D-ribose 1-diphosphate + ATP. It participates in amino-acid biosynthesis; L-histidine biosynthesis; L-histidine from 5-phospho-alpha-D-ribose 1-diphosphate: step 1/9. Functionally, catalyzes the condensation of ATP and 5-phosphoribose 1-diphosphate to form N'-(5'-phosphoribosyl)-ATP (PR-ATP). Has a crucial role in the pathway because the rate of histidine biosynthesis seems to be controlled primarily by regulation of HisG enzymatic activity. This is ATP phosphoribosyltransferase from Dictyoglomus thermophilum (strain ATCC 35947 / DSM 3960 / H-6-12).